The chain runs to 340 residues: Eukaryotic translation initiation factor 3 subunit I (340 aa).

WD repeat units follow at residues 8–47 (GHER…RLGT), 50–91 (GHQG…KVWD), 150–189 (CTES…QLEN), 194–233 (EFDH…ILKT), and 291–330 (GHFG…FDFM).

The protein belongs to the eIF-3 subunit I family. In terms of assembly, component of the eukaryotic translation initiation factor 3 (eIF-3) complex.

Its subcellular location is the cytoplasm. In terms of biological role, component of the eukaryotic translation initiation factor 3 (eIF-3) complex, which is involved in protein synthesis of a specialized repertoire of mRNAs and, together with other initiation factors, stimulates binding of mRNA and methionyl-tRNAi to the 40S ribosome. The eIF-3 complex specifically targets and initiates translation of a subset of mRNAs involved in cell proliferation. The polypeptide is Eukaryotic translation initiation factor 3 subunit I (tif34) (Neosartorya fischeri (strain ATCC 1020 / DSM 3700 / CBS 544.65 / FGSC A1164 / JCM 1740 / NRRL 181 / WB 181) (Aspergillus fischerianus)).